The following is a 421-amino-acid chain: Serine--tRNA ligase (421 aa).

Residue 229-231 (TSE) coordinates L-serine. 260–262 (RRE) lines the ATP pocket. Glu-283 contacts L-serine. 347-350 (EISS) contacts ATP. Ser-381 lines the L-serine pocket.

It belongs to the class-II aminoacyl-tRNA synthetase family. Type-1 seryl-tRNA synthetase subfamily. As to quaternary structure, homodimer. The tRNA molecule binds across the dimer.

The protein resides in the cytoplasm. It carries out the reaction tRNA(Ser) + L-serine + ATP = L-seryl-tRNA(Ser) + AMP + diphosphate + H(+). The catalysed reaction is tRNA(Sec) + L-serine + ATP = L-seryl-tRNA(Sec) + AMP + diphosphate + H(+). The protein operates within aminoacyl-tRNA biosynthesis; selenocysteinyl-tRNA(Sec) biosynthesis; L-seryl-tRNA(Sec) from L-serine and tRNA(Sec): step 1/1. In terms of biological role, catalyzes the attachment of serine to tRNA(Ser). Is also able to aminoacylate tRNA(Sec) with serine, to form the misacylated tRNA L-seryl-tRNA(Sec), which will be further converted into selenocysteinyl-tRNA(Sec). The protein is Serine--tRNA ligase of Fusobacterium nucleatum subsp. nucleatum (strain ATCC 25586 / DSM 15643 / BCRC 10681 / CIP 101130 / JCM 8532 / KCTC 2640 / LMG 13131 / VPI 4355).